A 115-amino-acid chain; its full sequence is UPF0738 protein SERP0585 (115 aa).

This sequence belongs to the UPF0738 family.

The protein is UPF0738 protein SERP0585 of Staphylococcus epidermidis (strain ATCC 35984 / DSM 28319 / BCRC 17069 / CCUG 31568 / BM 3577 / RP62A).